Here is a 335-residue protein sequence, read N- to C-terminus: MGRIKTYDFDGEYVTWTTRWSYAGSIYYRNGKFSASSNCGILKVLNKEINPKFLAYALKKEAKKFVNTTSAIPILRTQKVVEIPIDFPPLQIQEKIATILDTFTELSAELSAELSAELSAELSAELRERKKQYAFYRDYLLNLKNWKEENKYYKLGEIAQKVLVGGEKPADFSKEKNEVYKYPILSNNSKAEEFLVYSKTFRVEEKSITVSARGTIGAVFYRDFAYLPAVSLICFVPKEEFDIRFLFHALRAIKFKKQGSATGQLTVAQFKEYGIHVPSLKKQKEIAAILDPLYSFFTDLNEGIPAEIELRKKQLDYYQNFLFNWVQNQKAASIL.

This sequence belongs to the type-I restriction system S methylase family. In terms of assembly, the methyltransferase is composed of M and S polypeptides.

Functionally, the specificity (S) subunit of a type I methyltransferase (MTase); this subunit dictates DNA sequence specificity. The single R subunit has multiple frameshifts and is probably not expressed. The polypeptide is Putative type I specificity subunit S.MpnORF89P (Mycoplasma pneumoniae (strain ATCC 29342 / M129 / Subtype 1) (Mycoplasmoides pneumoniae)).